The following is a 675-amino-acid chain: MTVKEHKVVHEAQNVEALHAPEHFYKSQPGPSYIKDMKQYKEMYKQSVEDPENFFGEKARELLDWDRPFTRSKYGSLENGDVTWFLNGELNAAYNCVDRHAFANPDKPALIYEADEEADNRMITFSELLRQVSRVAGVLQSWGVKKGDTVAVYLPMIPEAVVAMLAIARLGAIHSVVFAGFSAGSLKDRVVDAGCKVVITCDEGKRGGKTVHTKKIVDEGLNGISLVSHILVFQRTGSEGIPMTAGRDYWWHEETAKQRSYLPPVPCNSEDPLFLLYTSGSTGSPKGVVHSTAGYLLGAAMTTRYVFDIHPEDVLFTAGDVGWITGHTYALYGPLVLGTASIIFESTPAYPDYGRYWRIIQRHKATHFYVAPTALRLIKRVGEAEIPKYDISSLRVLGSVGEPISPELWEWYYEKVGNKNCVICDTMWQTESGSHLIAPQAGAVPTKPGSATVPFFGVDACIIDPVTGIELQGNDVEGVLAVKSSWPSMARSVWQNHHRYVDTYLKPYPGYYFTGDGAGRDHDGYYWIRGRVDDVVNVSGHRLSTAEIEASLTNHDNVSESAVVGIADELTGQSVIAFVSLKDGSSRESSAVVAMRRELVLQVRGEIGPFAAPKCVILVKDLPKTRSGKIMRRVLRKVASNEADQLGDLSTMANSEVVPSIIAAVDEQFFAEKKK.

Residues 206–209 (RGGK) and T325 each bind CoA. Residues 401–403 (GEP), 425–430 (DTMWQT), D516, and R531 each bind ATP. S539 is a CoA binding site. An ATP-binding site is contributed by R542. Position 604 (R604) interacts with CoA.

Belongs to the ATP-dependent AMP-binding enzyme family.

It carries out the reaction acetate + ATP + CoA = acetyl-CoA + AMP + diphosphate. This chain is Acetyl-coenzyme A synthetase 2 (ACS2), found in Zygosaccharomyces bailii.